A 348-amino-acid polypeptide reads, in one-letter code: Protein RecA (348 aa).

71–78 (GVESSGKT) serves as a coordination point for ATP.

The protein belongs to the RecA family.

The protein resides in the cytoplasm. Functionally, can catalyze the hydrolysis of ATP in the presence of single-stranded DNA, the ATP-dependent uptake of single-stranded DNA by duplex DNA, and the ATP-dependent hybridization of homologous single-stranded DNAs. It interacts with LexA causing its activation and leading to its autocatalytic cleavage. The chain is Protein RecA from Aquifex pyrophilus.